The chain runs to 351 residues: UDP-N-acetylglucosamine--N-acetylmuramyl-(pentapeptide) pyrophosphoryl-undecaprenol N-acetylglucosamine transferase (351 aa).

UDP-N-acetyl-alpha-D-glucosamine-binding positions include 13–15, Asn125, Arg161, Ser189, Ile241, 260–265, and Gln285; these read TGG and ALTVCE.

This sequence belongs to the glycosyltransferase 28 family. MurG subfamily.

Its subcellular location is the cell inner membrane. It carries out the reaction di-trans,octa-cis-undecaprenyl diphospho-N-acetyl-alpha-D-muramoyl-L-alanyl-D-glutamyl-meso-2,6-diaminopimeloyl-D-alanyl-D-alanine + UDP-N-acetyl-alpha-D-glucosamine = di-trans,octa-cis-undecaprenyl diphospho-[N-acetyl-alpha-D-glucosaminyl-(1-&gt;4)]-N-acetyl-alpha-D-muramoyl-L-alanyl-D-glutamyl-meso-2,6-diaminopimeloyl-D-alanyl-D-alanine + UDP + H(+). It participates in cell wall biogenesis; peptidoglycan biosynthesis. In terms of biological role, cell wall formation. Catalyzes the transfer of a GlcNAc subunit on undecaprenyl-pyrophosphoryl-MurNAc-pentapeptide (lipid intermediate I) to form undecaprenyl-pyrophosphoryl-MurNAc-(pentapeptide)GlcNAc (lipid intermediate II). In Haemophilus influenzae (strain ATCC 51907 / DSM 11121 / KW20 / Rd), this protein is UDP-N-acetylglucosamine--N-acetylmuramyl-(pentapeptide) pyrophosphoryl-undecaprenol N-acetylglucosamine transferase.